The primary structure comprises 193 residues: MGGPGSSPCASCKLLRRRCAKDCIFAPYFPPDDPHKFAIVHKVFGASNVSKMLQELPVHQRADAVNSLVFEANARVRDPVYGCVGAISYLQNQVSQLQMQLAVAQAEILCIQMQNEPTLQSHHQVLELDQDHKALLLNNNNINNCNTNNNNNNFGYAMSSGQFNSNFASPSSIMQMQMQMQMQDPLKQESLWT.

An LOB domain is found at 7–108 (SPCASCKLLR…MQLAVAQAEI (102 aa)).

This sequence belongs to the LOB domain-containing protein family. Expressed predominantly in roots, and at low levels in shoots, floral stems and open flowers.

The chain is LOB domain-containing protein 12 (LBD12) from Arabidopsis thaliana (Mouse-ear cress).